We begin with the raw amino-acid sequence, 81 residues long: Sulfur carrier protein TusA (81 aa).

Residue cysteine 19 is the Cysteine persulfide intermediate of the active site.

Belongs to the sulfur carrier protein TusA family. As to quaternary structure, interacts with IscS.

The protein localises to the cytoplasm. The protein operates within tRNA modification. Its function is as follows. Sulfur carrier protein involved in sulfur trafficking in the cell. Part of a sulfur-relay system required for 2-thiolation during synthesis of 2-thiouridine of the modified wobble base 5-methylaminomethyl-2-thiouridine (mnm(5)s(2)U) in tRNA. Interacts with IscS and stimulates its cysteine desulfurase activity. Accepts an activated sulfur from IscS, which is then transferred to TusD, and thus determines the direction of sulfur flow from IscS to 2-thiouridine formation. Also appears to be involved in sulfur transfer for the biosynthesis of molybdopterin. This chain is Sulfur carrier protein TusA, found in Citrobacter koseri (strain ATCC BAA-895 / CDC 4225-83 / SGSC4696).